Consider the following 776-residue polypeptide: Mitochondrial intermediate peptidase (776 aa).

The transit peptide at methionine 1–leucine 28 directs the protein to the mitochondrion. The disordered stretch occupies residues aspartate 48–tyrosine 71. The span at serine 53 to tyrosine 71 shows a compositional bias: polar residues. Histidine 567 contacts Zn(2+). Glutamate 568 is an active-site residue. Positions 571 and 574 each coordinate Zn(2+).

The protein belongs to the peptidase M3 family. Zn(2+) is required as a cofactor.

The protein localises to the mitochondrion matrix. The enzyme catalyses Release of an N-terminal octapeptide as second stage of processing of some proteins imported into the mitochondrion.. Functionally, cleaves proteins, imported into the mitochondrion, to their mature size. While most mitochondrial precursor proteins are processed to the mature form in one step by mitochondrial processing peptidase (MPP), the sequential cleavage by MIP of an octapeptide after initial processing by MPP is a required step for a subgroup of nuclear-encoded precursor proteins destined for the matrix or the inner membrane. The sequence is that of Mitochondrial intermediate peptidase (OCT1) from Eremothecium gossypii (strain ATCC 10895 / CBS 109.51 / FGSC 9923 / NRRL Y-1056) (Yeast).